The chain runs to 296 residues: 1,2-beta-oligomannan phosphorylase (296 aa).

This sequence belongs to the glycosyl hydrolase 130 family. As to quaternary structure, homodimer.

It carries out the reaction [(1-&gt;2)-beta-D-mannosyl](n) + phosphate = [(1-&gt;2)-beta-D-mannosyl](n-1) + alpha-D-mannose 1-phosphate. The protein operates within nucleotide-sugar biosynthesis; GDP-alpha-D-mannose biosynthesis. In terms of biological role, probably involved in a salvage pathway for GDP-D-mannose biosynthesis. Catalyzes the reversible phosphorolysis of 1,2-beta-oligomannan. In phosphorolytic reactions, prefers 1,2-beta-oligomannan with a degree of polymerization (DP) of 3, 4 and 5. Produces alpha-D-mannose 1-phosphate, which is the precursor of GDP-D-mannose. This chain is 1,2-beta-oligomannan phosphorylase, found in Thermoanaerobacter sp. (strain X514).